Reading from the N-terminus, the 638-residue chain is MDLWQLLLTLALAGSSDAFSGSEATAAILSRAPWSLQSVNPGLKTNSSKEPKFTKCRSPERETFSCHWTDEVHHGTKNLGPIQLFYTRRNTQEWTQEWKECPDYVSAGENSCYFNSSFTSIWIPYCIKLTSNGGTVDEKCFSVDEIVQPDPPIALNWTLLNVSLTGIHADIQVRWEAPRNADIQKGWMVLEYELQYKEVNETKWKMMDPILTTSVPVYSLKVDKEYEVRVRSKQRNSGNYGEFSEVLYVTLPQMSQFTCEEDFYFPWLLIIIFGIFGLTVMLFVFLFSKQQRIKMLILPPVPVPKIKGIDPDLLKEGKLEEVNTILAIHDSYKPEFHSDDSWVEFIELDIDEPDEKTEESDTDRLLSSDHEKSHSNLGVKDGDSGRTSCCEPDILETDFNANDIHEGTSEVAQPQRLKGEADLLCLDQKNQNNSPYHDACPATQQPSVIQAEKNKPQPLPTEGAESTHQAAHIQLSNPSSLSNIDFYAQVSDITPAGSVVLSPGQKNKAGMSQCDMHPEMVSLCQENFLMDNAYFCEADAKKCIPVAPHIKVESHIQPSLNQEDIYITTESLTTAAGRPGTGEHVPGSEMPVPDYTSIHIVQSPQGLILNATALPLPDKEFLSSCGYVSTDQLNKIMP.

Positions 1 to 18 (MDLWQLLLTLALAGSSDA) are cleaved as a signal peptide. The Extracellular segment spans residues 19–264 (FSGSEATAAI…SQFTCEEDFY (246 aa)). Asn46 is a glycosylation site (N-linked (GlcNAc...) asparagine). 2 disulfides stabilise this stretch: Cys56–Cys66 and Cys101–Cys112. Asn115 is a glycosylation site (N-linked (GlcNAc...) asparagine). Cysteines 126 and 140 form a disulfide. The region spanning 151 to 254 (PPIALNWTLL…EVLYVTLPQM (104 aa)) is the Fibronectin type-III domain. N-linked (GlcNAc...) asparagine glycans are attached at residues Asn156, Asn161, and Asn200. Residues 240-244 (YGEFS) carry the WSXWS motif motif. Residues 260–262 (EED) form a required for ADAM17-mediated proteolysis region. A helical membrane pass occupies residues 265-288 (FPWLLIIIFGIFGLTVMLFVFLFS). At 289–638 (KQQRIKMLIL…STDQLNKIMP (350 aa)) the chain is on the cytoplasmic side. A required for JAK2 binding region spans residues 294–379 (KMLILPPVPV…HEKSHSNLGV (86 aa)). Residues 297-305 (ILPPVPVPK) carry the Box 1 motif motif. The UbE motif motif lies at 340–349 (DSWVEFIELD). At Ser341 the chain carries Phosphoserine. The segment at 353–391 (PDEKTEESDTDRLLSSDHEKSHSNLGVKDGDSGRTSCCE) is disordered. A compositionally biased stretch (basic and acidic residues) spans 362–384 (TDRLLSSDHEKSHSNLGVKDGDS). A phosphotyrosine; by JAK2 mark is found at Tyr487 and Tyr595.

It belongs to the type I cytokine receptor family. Type 1 subfamily. In terms of assembly, on growth hormone (GH) binding, forms homodimers and binds JAK2 via a box 1-containing domain. In terms of processing, the soluble form (GHBP) is produced by phorbol ester-promoted proteolytic cleavage at the cell surface (shedding) by ADAM17/TACE. Shedding is inhibited by growth hormone (GH) binding to the receptor probably due to a conformational change in GHR rendering the receptor inaccessible to ADAM17. On GH binding, phosphorylated on tyrosine residues in the cytoplasmic domain by JAK2. Post-translationally, ubiquitinated by the ECS(SOCS2) complex following ligand-binding and phosphorylation by JAK2, leading to its degradation by the proteasome. Regulation by the ECS(SOCS2) complex acts as a negative feedback loop of growth hormone receptor signaling. Ubiquitination is not sufficient for GHR internalization. In terms of tissue distribution, expressed in various tissues with high expression in liver and skeletal muscle. Isoform 2 is expressed in lung, stomach and muscle. As to expression, predominantly expressed in kidney, bladder, adrenal gland and brain stem. Highly expressed in placental villi.

Its subcellular location is the cell membrane. The protein resides in the secreted. Functionally, receptor for pituitary gland growth hormone (GH1) involved in regulating postnatal body growth. On ligand binding, couples to the JAK2/STAT5 pathway. The soluble form (GHBP) acts as a reservoir of growth hormone in plasma and may be a modulator/inhibitor of GH signaling. Its function is as follows. Up-regulates the production of the soluble Growth hormone-binding protein form (GHBP) and acts as a negative inhibitor of growth hormone signaling. This chain is Growth hormone receptor (GHR), found in Homo sapiens (Human).